The chain runs to 334 residues: Ketol-acid reductoisomerase (NADP(+)) (334 aa).

In terms of domain architecture, KARI N-terminal Rossmann spans 1–181 (MTTVYYDQSV…GATRAGVLET (181 aa)). NADP(+) is bound by residues 25–28 (YGSQ), arginine 48, serine 52, and 82–85 (DEIQ). The active site involves histidine 107. Glycine 133 contributes to the NADP(+) binding site. One can recognise a KARI C-terminal knotted domain in the interval 182-327 (SFKEETETDL…RELRDMMPFI (146 aa)). Residues aspartate 190, glutamate 194, glutamate 226, and glutamate 230 each coordinate Mg(2+). Serine 251 lines the substrate pocket.

The protein belongs to the ketol-acid reductoisomerase family. Mg(2+) serves as cofactor.

It catalyses the reaction (2R)-2,3-dihydroxy-3-methylbutanoate + NADP(+) = (2S)-2-acetolactate + NADPH + H(+). The catalysed reaction is (2R,3R)-2,3-dihydroxy-3-methylpentanoate + NADP(+) = (S)-2-ethyl-2-hydroxy-3-oxobutanoate + NADPH + H(+). The protein operates within amino-acid biosynthesis; L-isoleucine biosynthesis; L-isoleucine from 2-oxobutanoate: step 2/4. It functions in the pathway amino-acid biosynthesis; L-valine biosynthesis; L-valine from pyruvate: step 2/4. Involved in the biosynthesis of branched-chain amino acids (BCAA). Catalyzes an alkyl-migration followed by a ketol-acid reduction of (S)-2-acetolactate (S2AL) to yield (R)-2,3-dihydroxy-isovalerate. In the isomerase reaction, S2AL is rearranged via a Mg-dependent methyl migration to produce 3-hydroxy-3-methyl-2-ketobutyrate (HMKB). In the reductase reaction, this 2-ketoacid undergoes a metal-dependent reduction by NADPH to yield (R)-2,3-dihydroxy-isovalerate. In Staphylococcus saprophyticus subsp. saprophyticus (strain ATCC 15305 / DSM 20229 / NCIMB 8711 / NCTC 7292 / S-41), this protein is Ketol-acid reductoisomerase (NADP(+)).